Reading from the N-terminus, the 496-residue chain is Probable cytosol aminopeptidase (496 aa).

Positions 266 and 271 each coordinate Mn(2+). Lys-278 is a catalytic residue. Mn(2+) contacts are provided by Asp-290, Asp-349, and Glu-351. Residue Arg-353 is part of the active site.

It belongs to the peptidase M17 family. Requires Mn(2+) as cofactor.

The protein resides in the cytoplasm. The catalysed reaction is Release of an N-terminal amino acid, Xaa-|-Yaa-, in which Xaa is preferably Leu, but may be other amino acids including Pro although not Arg or Lys, and Yaa may be Pro. Amino acid amides and methyl esters are also readily hydrolyzed, but rates on arylamides are exceedingly low.. It catalyses the reaction Release of an N-terminal amino acid, preferentially leucine, but not glutamic or aspartic acids.. In terms of biological role, presumably involved in the processing and regular turnover of intracellular proteins. Catalyzes the removal of unsubstituted N-terminal amino acids from various peptides. The polypeptide is Probable cytosol aminopeptidase (Trichodesmium erythraeum (strain IMS101)).